A 410-amino-acid chain; its full sequence is CinA-like protein (410 aa).

It belongs to the CinA family.

The polypeptide is CinA-like protein (Anaeromyxobacter sp. (strain Fw109-5)).